Reading from the N-terminus, the 338-residue chain is Nucleoid-associated protein PM1885 (338 aa).

Belongs to the YejK family.

It is found in the cytoplasm. Its subcellular location is the nucleoid. This is Nucleoid-associated protein PM1885 from Pasteurella multocida (strain Pm70).